The chain runs to 258 residues: Indole-3-glycerol phosphate synthase (258 aa).

The protein belongs to the TrpC family.

The catalysed reaction is 1-(2-carboxyphenylamino)-1-deoxy-D-ribulose 5-phosphate + H(+) = (1S,2R)-1-C-(indol-3-yl)glycerol 3-phosphate + CO2 + H2O. Its pathway is amino-acid biosynthesis; L-tryptophan biosynthesis; L-tryptophan from chorismate: step 4/5. The polypeptide is Indole-3-glycerol phosphate synthase (Campylobacter fetus subsp. fetus (strain 82-40)).